The sequence spans 307 residues: Leucine-rich repeat-containing protein 59 (307 aa).

Over 1–247 the chain is Cytoplasmic; it reads MARANGRSQN…LAQRQSRLRK (247 aa). LRR repeat units lie at residues 10–31, 40–61, 63–84, 86–107, and 109–131; these read NLRD…SEVP, KATA…FCNL, HIVR…FGRL, NLQH…FAQL, and SLKW…AGDC. The stretch at 156–222 forms a coiled coil; that stretch reads EIELQRKLQL…LNSNKKAEEE (67 aa). The tract at residues 170–238 is disordered; sequence KKKLEAKQRV…RMATPKEKKL (69 aa). Composition is skewed to basic and acidic residues over residues 174 to 187 and 194 to 238; these read EAKQ…EREM and QQKE…EKKL. A helical transmembrane segment spans residues 248–268; that stretch reads IACILLFGLLVVLLVVVACRF. Over 269–307 the chain is Lumenal; the sequence is TDLKAINMCTSVNAIYKETLSALHSNPVLERFLQDPSSQ.

Interacts with SGO1.

The protein resides in the microsome membrane. It localises to the endoplasmic reticulum membrane. It is found in the nucleus envelope. Functionally, required for nuclear import of FGF1. The protein is Leucine-rich repeat-containing protein 59 (lrrc59) of Xenopus laevis (African clawed frog).